We begin with the raw amino-acid sequence, 324 residues long: Holliday junction branch migration complex subunit RuvB (324 aa).

Residues 1 to 180 are large ATPase domain (RuvB-L); the sequence is MKSISCGKEY…FGIPLHLEFY (180 aa). Residues Ile-19, Arg-20, Gly-61, Lys-64, Thr-65, Thr-66, 127–129, Arg-170, Tyr-180, and Arg-217 contribute to the ATP site; that span reads EDF. Thr-65 contributes to the Mg(2+) binding site. A small ATPAse domain (RuvB-S) region spans residues 181-251; it reads SFEELVNIIK…VADSVLLKLG (71 aa). The interval 254–324 is head domain (RuvB-H); that stretch reads KMGLNKLDMN…TDQAKEYLSL (71 aa). DNA-binding residues include Arg-307 and Arg-312.

It belongs to the RuvB family. As to quaternary structure, homohexamer. Forms an RuvA(8)-RuvB(12)-Holliday junction (HJ) complex. HJ DNA is sandwiched between 2 RuvA tetramers; dsDNA enters through RuvA and exits via RuvB. An RuvB hexamer assembles on each DNA strand where it exits the tetramer. Each RuvB hexamer is contacted by two RuvA subunits (via domain III) on 2 adjacent RuvB subunits; this complex drives branch migration. In the full resolvosome a probable DNA-RuvA(4)-RuvB(12)-RuvC(2) complex forms which resolves the HJ.

Its subcellular location is the cytoplasm. The catalysed reaction is ATP + H2O = ADP + phosphate + H(+). Functionally, the RuvA-RuvB-RuvC complex processes Holliday junction (HJ) DNA during genetic recombination and DNA repair, while the RuvA-RuvB complex plays an important role in the rescue of blocked DNA replication forks via replication fork reversal (RFR). RuvA specifically binds to HJ cruciform DNA, conferring on it an open structure. The RuvB hexamer acts as an ATP-dependent pump, pulling dsDNA into and through the RuvAB complex. RuvB forms 2 homohexamers on either side of HJ DNA bound by 1 or 2 RuvA tetramers; 4 subunits per hexamer contact DNA at a time. Coordinated motions by a converter formed by DNA-disengaged RuvB subunits stimulates ATP hydrolysis and nucleotide exchange. Immobilization of the converter enables RuvB to convert the ATP-contained energy into a lever motion, pulling 2 nucleotides of DNA out of the RuvA tetramer per ATP hydrolyzed, thus driving DNA branch migration. The RuvB motors rotate together with the DNA substrate, which together with the progressing nucleotide cycle form the mechanistic basis for DNA recombination by continuous HJ branch migration. Branch migration allows RuvC to scan DNA until it finds its consensus sequence, where it cleaves and resolves cruciform DNA. The sequence is that of Holliday junction branch migration complex subunit RuvB from Wolbachia sp. subsp. Drosophila simulans (strain wRi).